A 329-amino-acid polypeptide reads, in one-letter code: tRNA(Ile)-lysidine synthase (329 aa).

Residue 37 to 42 (SGGSDS) coordinates ATP.

Belongs to the tRNA(Ile)-lysidine synthase family.

Its subcellular location is the cytoplasm. The enzyme catalyses cytidine(34) in tRNA(Ile2) + L-lysine + ATP = lysidine(34) in tRNA(Ile2) + AMP + diphosphate + H(+). Its function is as follows. Ligates lysine onto the cytidine present at position 34 of the AUA codon-specific tRNA(Ile) that contains the anticodon CAU, in an ATP-dependent manner. Cytidine is converted to lysidine, thus changing the amino acid specificity of the tRNA from methionine to isoleucine. This chain is tRNA(Ile)-lysidine synthase, found in Zymomonas mobilis subsp. mobilis (strain ATCC 31821 / ZM4 / CP4).